A 281-amino-acid polypeptide reads, in one-letter code: Elongation factor Ts (281 aa).

Residues 79–82 form an involved in Mg(2+) ion dislocation from EF-Tu region; sequence TDFV.

The protein belongs to the EF-Ts family.

It localises to the cytoplasm. In terms of biological role, associates with the EF-Tu.GDP complex and induces the exchange of GDP to GTP. It remains bound to the aminoacyl-tRNA.EF-Tu.GTP complex up to the GTP hydrolysis stage on the ribosome. This chain is Elongation factor Ts, found in Wolbachia pipientis subsp. Culex pipiens (strain wPip).